Here is a 355-residue protein sequence, read N- to C-terminus: D-alanine--D-alanine ligase (355 aa).

The region spanning 143-350 is the ATP-grasp domain; that stretch reads KTIFSNHKLP…IEQLVAKLVD (208 aa). Residue 178–233 participates in ATP binding; sequence LKKLKFPVFVKPSNSGSSLGISKVKNESEILLALEKAWGIDPRILIEEGLEVREIE. Residues Asp303, Glu317, and Asn319 each contribute to the Mg(2+) site.

It belongs to the D-alanine--D-alanine ligase family. It depends on Mg(2+) as a cofactor. Mn(2+) is required as a cofactor.

Its subcellular location is the cytoplasm. The enzyme catalyses 2 D-alanine + ATP = D-alanyl-D-alanine + ADP + phosphate + H(+). Its pathway is cell wall biogenesis; peptidoglycan biosynthesis. Its function is as follows. Cell wall formation. In Prochlorococcus marinus (strain MIT 9301), this protein is D-alanine--D-alanine ligase.